We begin with the raw amino-acid sequence, 334 residues long: Holliday junction branch migration complex subunit RuvB (334 aa).

The large ATPase domain (RuvB-L) stretch occupies residues 4–184 (ADRLIQPQIQ…FGIPLRLEFY (181 aa)). Residues arginine 24, glycine 65, lysine 68, threonine 69, threonine 70, 131-133 (EDY), arginine 174, tyrosine 184, and arginine 221 contribute to the ATP site. Threonine 69 contacts Mg(2+). The segment at 185 to 255 (NIKDLSTIVT…VAEHALDLLD (71 aa)) is small ATPAse domain (RuvB-S). The segment at 258–334 (SEGFDYMDRK…YQHFELIKPE (77 aa)) is head domain (RuvB-H). Residues arginine 294, arginine 313, and arginine 318 each contribute to the DNA site.

It belongs to the RuvB family. As to quaternary structure, homohexamer. Forms an RuvA(8)-RuvB(12)-Holliday junction (HJ) complex. HJ DNA is sandwiched between 2 RuvA tetramers; dsDNA enters through RuvA and exits via RuvB. An RuvB hexamer assembles on each DNA strand where it exits the tetramer. Each RuvB hexamer is contacted by two RuvA subunits (via domain III) on 2 adjacent RuvB subunits; this complex drives branch migration. In the full resolvosome a probable DNA-RuvA(4)-RuvB(12)-RuvC(2) complex forms which resolves the HJ.

The protein resides in the cytoplasm. It catalyses the reaction ATP + H2O = ADP + phosphate + H(+). In terms of biological role, the RuvA-RuvB-RuvC complex processes Holliday junction (HJ) DNA during genetic recombination and DNA repair, while the RuvA-RuvB complex plays an important role in the rescue of blocked DNA replication forks via replication fork reversal (RFR). RuvA specifically binds to HJ cruciform DNA, conferring on it an open structure. The RuvB hexamer acts as an ATP-dependent pump, pulling dsDNA into and through the RuvAB complex. RuvB forms 2 homohexamers on either side of HJ DNA bound by 1 or 2 RuvA tetramers; 4 subunits per hexamer contact DNA at a time. Coordinated motions by a converter formed by DNA-disengaged RuvB subunits stimulates ATP hydrolysis and nucleotide exchange. Immobilization of the converter enables RuvB to convert the ATP-contained energy into a lever motion, pulling 2 nucleotides of DNA out of the RuvA tetramer per ATP hydrolyzed, thus driving DNA branch migration. The RuvB motors rotate together with the DNA substrate, which together with the progressing nucleotide cycle form the mechanistic basis for DNA recombination by continuous HJ branch migration. Branch migration allows RuvC to scan DNA until it finds its consensus sequence, where it cleaves and resolves cruciform DNA. This is Holliday junction branch migration complex subunit RuvB from Shewanella baltica (strain OS223).